The chain runs to 493 residues: Transcript termination protein A18 (493 aa).

In terms of domain architecture, Helicase ATP-binding spans 100–256; that stretch reads MIESKRPLYI…NSIINIAKLS (157 aa). 113-120 provides a ligand contact to ATP; that stretch reads LACGFGKT. Residues 206–209 carry the DESH box motif; it reads DESH.

Belongs to the helicase family. Poxviruses subfamily. Interacts with G2. Might be part of a transcription complex composed at least of G2, A18, and H5.

The protein localises to the virion. DNA helicase which seems to act as a postreplicative transcription termination factor. Involved in ATP-dependent release of nascent RNA. Forms a stable complex with single-stranded DNA, and to a lesser extent RNA. This Vaccinia virus (strain Tian Tan) (VACV) protein is Transcript termination protein A18.